The primary structure comprises 165 residues: Lipoprotein signal peptidase (165 aa).

A run of 3 helical transmembrane segments spans residues Pro-9–Val-29, Trp-65–Leu-85, and Thr-97–Val-119. Catalysis depends on residues Asp-121 and Asp-139. The helical transmembrane segment at Val-134–Phe-154 threads the bilayer.

Belongs to the peptidase A8 family.

The protein localises to the cell inner membrane. It carries out the reaction Release of signal peptides from bacterial membrane prolipoproteins. Hydrolyzes -Xaa-Yaa-Zaa-|-(S,diacylglyceryl)Cys-, in which Xaa is hydrophobic (preferably Leu), and Yaa (Ala or Ser) and Zaa (Gly or Ala) have small, neutral side chains.. It participates in protein modification; lipoprotein biosynthesis (signal peptide cleavage). In terms of biological role, this protein specifically catalyzes the removal of signal peptides from prolipoproteins. The polypeptide is Lipoprotein signal peptidase (Histophilus somni (strain 2336) (Haemophilus somnus)).